The chain runs to 194 residues: MTAVQLIVGLGNPGPEYDQTRHNAGALFVERLAHAQGVSLVADRKYFGLVGKFSHQGKDVRLLIPTTYMNRSGQSVAALAGFFRIAPDAILVAHDELDMPPGVAKLKTGGGHGGHNGLRDIIAQLGNQNSFHRLRLGIGHPGHSSLVSGYVLGRAPRSEQELLDTSIDFALGVLPEMLAGDWTRAMQKLHSQKA.

Tyr17 is a binding site for tRNA. His22 (proton acceptor) is an active-site residue. 3 residues coordinate tRNA: Tyr68, Asn70, and Asn116.

The protein belongs to the PTH family. Monomer.

The protein localises to the cytoplasm. It catalyses the reaction an N-acyl-L-alpha-aminoacyl-tRNA + H2O = an N-acyl-L-amino acid + a tRNA + H(+). In terms of biological role, hydrolyzes ribosome-free peptidyl-tRNAs (with 1 or more amino acids incorporated), which drop off the ribosome during protein synthesis, or as a result of ribosome stalling. Its function is as follows. Catalyzes the release of premature peptidyl moieties from peptidyl-tRNA molecules trapped in stalled 50S ribosomal subunits, and thus maintains levels of free tRNAs and 50S ribosomes. The sequence is that of Peptidyl-tRNA hydrolase from Pseudomonas aeruginosa (strain LESB58).